The sequence spans 566 residues: Oxygen-dependent choline dehydrogenase (566 aa).

7 to 36 is an FAD binding site; that stretch reads DYIICGAGSAGNVLATRLTEDPNVTVLLLE. Positions 183 to 203 are disordered; it reads QQEGFGPMDRTVTPKGRRAST. Residue His474 is the Proton acceptor of the active site.

The protein belongs to the GMC oxidoreductase family. FAD serves as cofactor.

The enzyme catalyses choline + A = betaine aldehyde + AH2. The catalysed reaction is betaine aldehyde + NAD(+) + H2O = glycine betaine + NADH + 2 H(+). It participates in amine and polyamine biosynthesis; betaine biosynthesis via choline pathway; betaine aldehyde from choline (cytochrome c reductase route): step 1/1. In terms of biological role, involved in the biosynthesis of the osmoprotectant glycine betaine. Catalyzes the oxidation of choline to betaine aldehyde and betaine aldehyde to glycine betaine at the same rate. The polypeptide is Oxygen-dependent choline dehydrogenase (Burkholderia ambifaria (strain ATCC BAA-244 / DSM 16087 / CCUG 44356 / LMG 19182 / AMMD) (Burkholderia cepacia (strain AMMD))).